The primary structure comprises 543 residues: Mitochondrial distribution and morphology protein 34 (543 aa).

The region spanning 1 to 202 (MSFNVNWNSL…LPTLLHKVSL (202 aa)) is the SMP-LTD domain. The tract at residues 519–543 (AFSHNDPSITPFELPPPPYHQLSRA) is disordered.

The protein belongs to the MDM34 family. Component of the ER-mitochondria encounter structure (ERMES) or MDM complex, composed of MMM1, MDM10, MDM12 and MDM34.

Its subcellular location is the mitochondrion outer membrane. Its function is as follows. Component of the ERMES/MDM complex, which serves as a molecular tether to connect the endoplasmic reticulum (ER) and mitochondria. Components of this complex are involved in the control of mitochondrial shape and protein biogenesis, and function in nonvesicular lipid trafficking between the ER and mitochondria. MDM34 is required for the interaction of the ER-resident membrane protein MMM1 and the outer mitochondrial membrane-resident beta-barrel protein MDM10. The polypeptide is Mitochondrial distribution and morphology protein 34 (Clavispora lusitaniae (strain ATCC 42720) (Yeast)).